Consider the following 444-residue polypeptide: Shufflon protein B' (444 aa).

Residues 1–361 form a constant region region; sequence MKKYDRGWAS…TGAILSCQSG (361 aa). Residues 362–444 are variable region; it reads TWRKVGSGEL…GSITVYAICQ (83 aa).

The sequence is that of Shufflon protein B' from Escherichia coli.